We begin with the raw amino-acid sequence, 1134 residues long: Phospholipid-transporting ATPase IH (1134 aa).

Residues 1 to 61 are Cytoplasmic-facing; it reads MDCSLVRTLV…SSKYTFWNFI (61 aa). A helical membrane pass occupies residues 62 to 82; the sequence is PKNLFEQFRRVANFYFLIIFL. The Extracellular segment spans residues 83-88; it reads VQLIID. Residues 89–110 traverse the membrane as a helical segment; sequence TPTSPVTSGLPLFFVITVTAIK. Residues 111-296 lie on the Cytoplasmic side of the membrane; the sequence is QGYEDWLRHK…SAVEKSMNAF (186 aa). A helical membrane pass occupies residues 297–318; it reads LIVYLCILISKALINTVLKYMW. Residues 319 to 349 are Extracellular-facing; that stretch reads QSEPFRDEPWYNQKTESERQRNLFLKAFTDF. The chain crosses the membrane as a helical span at residues 350–372; sequence LAFMVLFNYIIPVSMYVTVEMQK. Topologically, residues 373-881 are cytoplasmic; the sequence is FLGSYFITWD…GHFYYIRISE (509 aa). The 4-aspartylphosphate intermediate role is filled by aspartate 414. ATP contacts are provided by aspartate 414, lysine 415, threonine 416, glutamate 511, phenylalanine 553, lysine 576, arginine 607, threonine 687, glycine 688, and aspartate 689. Residue aspartate 414 coordinates Mg(2+). Threonine 416 provides a ligand contact to Mg(2+). Serine 738 carries the phosphoserine modification. ATP is bound by residues arginine 798 and lysine 804. Residue aspartate 825 coordinates Mg(2+). ATP-binding residues include asparagine 828 and aspartate 829. Aspartate 829 serves as a coordination point for Mg(2+). Residues 882–902 form a helical membrane-spanning segment; the sequence is LVQYFFYKNVCFIFPQFLYQF. Topologically, residues 903–914 are extracellular; it reads FCGFSQQTLYDT. The chain crosses the membrane as a helical span at residues 915 to 934; that stretch reads AYLTLYNISFTSLPILLYSL. At 935-964 the chain is on the cytoplasmic side; the sequence is MEQHVGIDVLKRDPTLYRDVAKNALLRWRV. The helical transmembrane segment at 965-986 threads the bilayer; sequence FIYWTLLGLFDALVFFFGAYFV. Topologically, residues 987 to 1000 are extracellular; the sequence is FENTTVTSNGQIFG. The chain crosses the membrane as a helical span at residues 1001–1023; it reads NWTFGTLVFTVMVFTVTLKLALD. The Cytoplasmic portion of the chain corresponds to 1024–1029; it reads THYWTW. A helical membrane pass occupies residues 1030–1050; the sequence is INHFVIWGSLLFYVVFSLLWG. Residues 1051–1068 are Extracellular-facing; it reads GVIWPFLNYQRMYYVFIQ. Residues 1069 to 1093 form a helical membrane-spanning segment; it reads MLSSGPAWLAIVLLVTISLLPDVLK. Over 1094–1134 the chain is Cytoplasmic; that stretch reads KVLCRQLWPTATERVQTKSQCLSVEQSTIFMLSQTSSSLSF.

The protein belongs to the cation transport ATPase (P-type) (TC 3.A.3) family. Type IV subfamily. As to quaternary structure, component of a P4-ATPase flippase complex which consists of a catalytic alpha subunit ATP11A and an accessory beta subunit TMEM30A. The cofactor is Mg(2+). Proteolytically cleaved by CASP3. Widely expressed. Expressed in myoblasts.

Its subcellular location is the cell membrane. The protein resides in the early endosome. The protein localises to the recycling endosome. It is found in the endoplasmic reticulum membrane. The enzyme catalyses ATP + H2O + phospholipidSide 1 = ADP + phosphate + phospholipidSide 2.. The catalysed reaction is a 1,2-diacyl-sn-glycero-3-phospho-L-serine(out) + ATP + H2O = a 1,2-diacyl-sn-glycero-3-phospho-L-serine(in) + ADP + phosphate + H(+). It carries out the reaction a 1,2-diacyl-sn-glycero-3-phosphoethanolamine(out) + ATP + H2O = a 1,2-diacyl-sn-glycero-3-phosphoethanolamine(in) + ADP + phosphate + H(+). With respect to regulation, the flippase activity is inactivated by caspase-mediated cleavage in apoptotic cells, allowing for PS exposure on the cell surface and engulfment of apoptotic cells by macrophages. The ATPase activity is up-regulated by aminophospholipids PS and PE and down-regulated by increasing intracellular Ca2+ levels. In terms of biological role, catalytic component of a P4-ATPase flippase complex which catalyzes the hydrolysis of ATP coupled to the transport of aminophospholipids, phosphatidylserines (PS) and phosphatidylethanolamines (PE), from the outer to the inner leaflet of the plasma membrane. Does not show flippase activity toward phosphatidylcholine (PC). Contributes to the maintenance of membrane lipid asymmetry with a specific role in morphogenesis of muscle cells. In myoblasts, mediates PS enrichment at the inner leaflet of plasma membrane, triggering PIEZO1-dependent Ca2+ influx and Rho GTPases signal transduction, subsequently leading to the assembly of cortical actomyosin fibers and myotube formation. May be involved in the uptake of farnesyltransferase inhibitor drugs, such as lonafarnib. This chain is Phospholipid-transporting ATPase IH (ATP11A), found in Homo sapiens (Human).